A 398-amino-acid polypeptide reads, in one-letter code: MQDLKQRPVSVFREFLDSEAAGGIILMVAAALALIVANSPLAETYFSVLHAYLGPLSVSHWVNDGLMAVFFLLVGLEIKREMLDGQLSTWPRRVLPGIAAAGGMLVPALVYVFINRNNSAALSGWAIPTATDIAFALGVLSLLGSRVPASLKVFLTALAIIDDLGAVIIIAIFYTSGLSLAYLGAAFAVIAALVVLNRMRVMTLLPYLVLGAILWVLVLKSGVHATLAGVALALTIPLERSAGVGHDLDHSPLHRLEHGLHKIVPFFVIPIFGFANAGVSLAGLSLGALIEPLTLGVAAGLVVGKLVGVFGSSALAIRLGLADLPAHTGWSHMIGISLLCGIGFTMSLFIGLLAFASDVALQDAVKVGILAGSFVAAILGAAVLLMAPAAGVAEEETE.

A run of 12 helical transmembrane segments spans residues 21–41 (AGGI…NSPL), 56–76 (LSVS…LVGL), 94–114 (VLPG…YVFI), 124–144 (GWAI…SLLG), 153–173 (VFLT…IAIF), 176–196 (SGLS…LVVL), 201–221 (VMTL…VLKS), 263–283 (IVPF…SLAG), 284–304 (LSLG…LVVG), 306–326 (LVGV…DLPA), 333–353 (MIGI…IGLL), and 367–387 (VGIL…LLMA).

The protein belongs to the NhaA Na(+)/H(+) (TC 2.A.33) antiporter family.

Its subcellular location is the cell inner membrane. It carries out the reaction Na(+)(in) + 2 H(+)(out) = Na(+)(out) + 2 H(+)(in). Na(+)/H(+) antiporter that extrudes sodium in exchange for external protons. In Mesorhizobium japonicum (strain LMG 29417 / CECT 9101 / MAFF 303099) (Mesorhizobium loti (strain MAFF 303099)), this protein is Na(+)/H(+) antiporter NhaA.